We begin with the raw amino-acid sequence, 300 residues long: Putative zinc finger protein 705EP (300 aa).

The 72-residue stretch at 7-78 folds into the KRAB domain; it reads VTFEDVAIDF…GREFLQDQNP (72 aa). Residues 172–194 form a C2H2-type 1; degenerate zinc finger; it reads YQCNLCEKAYTNCFHLRRPKMTH. 2 C2H2-type zinc fingers span residues 200-222 and 228-250; these read YTCHLCRKAFTQCSHLRRHEKTH and YKCHQCGKAFIQSFNLRRHERTH. The C2H2-type 4; degenerate zinc finger occupies 256–278; sequence YECDNSGKAFSQSSGFRGNKIIH.

This sequence belongs to the krueppel C2H2-type zinc-finger protein family.

It is found in the nucleus. Its function is as follows. May be involved in transcriptional regulation. This Homo sapiens (Human) protein is Putative zinc finger protein 705EP.